Consider the following 128-residue polypeptide: Gastrotropin (128 aa).

N-acetylalanine is present on alanine 2.

Belongs to the calycin superfamily. Fatty-acid binding protein (FABP) family.

The protein localises to the cytoplasm. It is found in the membrane. Binds to bile acids and is involved in enterohepatic bile acid metabolism. Required for efficient apical to basolateral transport of conjugated bile acids in ileal enterocytes. Stimulates gastric acid and pepsinogen secretion. The protein is Gastrotropin (FABP6) of Bos taurus (Bovine).